Reading from the N-terminus, the 345-residue chain is Sesquiterpene synthase GALMADRAFT_104215 (345 aa).

The Mg(2+) site is built by D91, N226, S230, and E234. Positions 91 to 95 match the DDXXD motif motif; it reads DEFTD. Residues R316 and Y317 each coordinate (2E,6E)-farnesyl diphosphate.

This sequence belongs to the terpene synthase family. It depends on Mg(2+) as a cofactor.

It catalyses the reaction (2E,6E)-farnesyl diphosphate = beta-gurjunene + diphosphate. Its function is as follows. Terpene cyclase that catalyzes the cyclization of farnesyl diphosphate (FPP) to beta-gurjunene. This Galerina marginata (strain CBS 339.88) protein is Sesquiterpene synthase GALMADRAFT_104215.